A 478-amino-acid chain; its full sequence is Cytochrome c-552 (478 aa).

Positions 1-26 (MARKTLRARRFFSLIFPFFFITSVYA) are cleaved as a signal peptide. His-94 provides a ligand contact to heme c. Cys-122, Cys-125, and Lys-126 together coordinate heme. Positions 160, 163, 164, 209, 212, and 213 each coordinate heme c. Residues Glu-215, Tyr-216, Lys-261, and Gln-263 each coordinate Ca(2+). Tyr-216 lines the substrate pocket. His-264 is a substrate binding site. Heme c contacts are provided by His-275, Cys-282, Cys-285, His-286, His-301, Cys-314, Cys-317, His-318, and His-393.

This sequence belongs to the cytochrome c-552 family. The cofactor is Ca(2+). Heme c is required as a cofactor.

The protein localises to the periplasm. It carries out the reaction 6 Fe(III)-[cytochrome c] + NH4(+) + 2 H2O = 6 Fe(II)-[cytochrome c] + nitrite + 8 H(+). The protein operates within nitrogen metabolism; nitrate reduction (assimilation). Its function is as follows. Catalyzes the reduction of nitrite to ammonia, consuming six electrons in the process. This chain is Cytochrome c-552, found in Salmonella typhi.